A 425-amino-acid chain; its full sequence is UPF0597 protein Swoo_4889 (425 aa).

This sequence belongs to the UPF0597 family.

This is UPF0597 protein Swoo_4889 from Shewanella woodyi (strain ATCC 51908 / MS32).